Consider the following 579-residue polypeptide: Folliculin (579 aa).

Residues 30–81 (PQGDGNEDSPGQGEQAEEEEGGIQMNSRMRAHSPAEGASVESSSPGPKKSDM) are disordered. 2 positions are modified to phosphoserine: Ser62 and Ser73. One can recognise a uDENN FLCN/SMCR8-type domain in the interval 86-242 (RSLAAGHPGY…RNGNAARSLT (157 aa)). The segment at 210–220 (AEQFGCPQRAQ) is essential for interaction with LDHA. Positions 287 to 310 (EKLADLEEESESWDNSEAEEEEKA) form a coiled coil. Positions 294–308 (EESESWDNSEAEEEE) are enriched in acidic residues. A disordered region spans residues 294-337 (EESESWDNSEAEEEEKAPVLPESTEGRELTQGPAESSSLSGCGS). Residue Ser302 is modified to Phosphoserine. Positions 326-336 (PAESSSLSGCG) are enriched in polar residues. One can recognise a cDENN FLCN/SMCR8-type domain in the interval 339–491 (QPRKLPVFKS…ILNKIEAALT (153 aa)). Phosphoserine; by ULK1 is present on residues Ser406, Ser537, and Ser542. The dDENN FLCN/SMCR8-type domain maps to 493 to 558 (QNLSVDVVDQ…LLKFWMTGLS (66 aa)). At Ser571 the chain carries Phosphoserine.

Belongs to the folliculin family. Interacts (via C-terminus) with FNIP1 or FNIP2 (via C-terminus). Component of the lysosomal folliculin complex (LFC), composed of FLCN, FNIP1 (or FNIP2), RagA/RRAGA or RagB/RRAGB GDP-bound, RagC/RRAGC or RagD/RRAGD GTP-bound, and Ragulator. Interaction with FNIP1 or FNIP2 mediates indirect interaction with the PRKAA1, PRKAB1 and PRKAG1 subunits of 5'-AMP-activated protein kinase (AMPK). Interacts with HSP90AA1 in the presence of FNIP1. Interacts with HSP70, STUB1, CDC37, AHSA1, CCT2, STIP1, PTGES3 and PPP5C. Interacts with GABARAP; interaction takes place in the presence of FNIP1 and/or FNIP2. Interacts with RILP; the interaction is direct and promotes association between RILP and RAB34. Interacts with KIF3A and KIF3B. Interacts with lactate dehydrogenase LDHA, but not LDHB; the interaction is direct, may preferentially bind LDHA dimers rather than tetramers, and regulates LDHA activity, acting as an uncompetitive inhibitor. Post-translationally, phosphorylation by ULK1 modulates the interaction with GABARAP and is required to regulate autophagy. In terms of tissue distribution, expressed in most tissues tested, including skin, lung, kidney, heart, testis and stomach.

The protein resides in the lysosome membrane. Its subcellular location is the cytoplasm. The protein localises to the cytosol. It is found in the cell projection. It localises to the cilium. The protein resides in the cytoskeleton. Its subcellular location is the microtubule organizing center. The protein localises to the centrosome. It is found in the spindle. It localises to the nucleus. GTPase-activating activity is inhibited in the folliculin complex (LFC), which stabilizes the GDP-bound state of RagA/RRAGA (or RagB/RRAGB), because Arg-164 is located far from the RagC/RRAGC or RagD/RRAGD nucleotide pocket. Disassembly of the LFC complex upon amino acid restimulation liberates the GTPase-activating activity. Multi-functional protein, involved in both the cellular response to amino acid availability and in the regulation of glycolysis. GTPase-activating protein that plays a key role in the cellular response to amino acid availability through regulation of the non-canonical mTORC1 signaling cascade controlling the MiT/TFE factors TFEB and TFE3. Activates mTORC1 by acting as a GTPase-activating protein: specifically stimulates GTP hydrolysis by RagC/RRAGC or RagD/RRAGD, promoting the conversion to the GDP-bound state of RagC/RRAGC or RagD/RRAGD, and thereby activating the kinase activity of mTORC1. The GTPase-activating activity is inhibited during starvation and activated in presence of nutrients. Acts as a key component for non-canonical mTORC1-dependent control of the MiT/TFE factors TFEB and TFE3, while it is not involved in mTORC1-dependent phosphorylation of canonical RPS6KB1/S6K1 and EIF4EBP1/4E-BP1. In low-amino acid conditions, the lysosomal folliculin complex (LFC) is formed on the membrane of lysosomes, which inhibits the GTPase-activating activity of FLCN, inactivates mTORC1 and maximizes nuclear translocation of TFEB and TFE3. Upon amino acid restimulation, RagA/RRAGA (or RagB/RRAGB) nucleotide exchange promotes disassembly of the LFC complex and liberates the GTPase-activating activity of FLCN, leading to activation of mTORC1 and subsequent cytoplasmic retention of TFEB and TFE3. Indirectly acts as a positive regulator of Wnt signaling by promoting mTOR-dependent cytoplasmic retention of MiT/TFE factor TFE3. Required for the exit of hematopoietic stem cell from pluripotency by promoting mTOR-dependent cytoplasmic retention of TFE3, thereby increasing Wnt signaling. Acts as an inhibitor of browning of adipose tissue by regulating mTOR-dependent cytoplasmic retention of TFE3. Involved in the control of embryonic stem cells differentiation; together with LAMTOR1 it is necessary to recruit and activate RagC/RRAGC and RagD/RRAGD at the lysosomes, and to induce exit of embryonic stem cells from pluripotency via non-canonical, mTOR-independent TFE3 inactivation. In response to flow stress, regulates STK11/LKB1 accumulation and mTORC1 activation through primary cilia: may act by recruiting STK11/LKB1 to primary cilia for activation of AMPK resided at basal bodies, causing mTORC1 down-regulation. Together with FNIP1 and/or FNIP2, regulates autophagy: following phosphorylation by ULK1, interacts with GABARAP and promotes autophagy. Required for starvation-induced perinuclear clustering of lysosomes by promoting association of RILP with its effector RAB34. Regulates glycolysis by binding to lactate dehydrogenase LDHA, acting as an uncompetitive inhibitor. The chain is Folliculin from Homo sapiens (Human).